The sequence spans 279 residues: Methyltransferase prhM (279 aa).

S-adenosyl-L-methionine-binding positions include 124–125 and 152–153; these read DI and DV.

This sequence belongs to the class I-like SAM-binding methyltransferase superfamily.

The protein operates within secondary metabolite biosynthesis; terpenoid biosynthesis. Methyltransferase; part of the gene cluster that mediates the biosynthesis of paraherquonin, a meroterpenoid with a unique, highly congested hexacyclic molecular architecture. The first step of the pathway is the synthesis of 3,5-dimethylorsellinic acid (DMOA) by the polyketide synthase prhL. Synthesis of DMOA is followed by farnesylation by the prenyltransferase prhE, methylesterification by the methyl-transferase prhM, epoxidation of the prenyl chain by the flavin-dependent monooxygenase prhF, and cyclization of the farnesyl moiety by the terpene cyclase prhH, to yield the tetracyclic intermediate, protoaustinoid A. The short chain dehydrogenase prhI then oxidizes the C-3 alcohol group of the terpene cyclase product to transform protoaustinoid A into protoaustinoid B. The FAD-binding monooxygenase prhJ catalyzes the oxidation of protoaustinoid B into preaustinoid A which is further oxidized into preaustinoid A1 by FAD-binding monooxygenase phrK. Finally, prhA leads to berkeleydione via the berkeleyone B intermediate. PrhA is a multifunctional dioxygenase that first desaturates at C5-C6 to form berkeleyone B, followed by rearrangement of the A/B-ring to form the cycloheptadiene moiety in berkeleydione. Berkeleydione serves as the key intermediate for the biosynthesis of paraherquonin as well as many other meroterpenoids. The cytochrome P450 monooxygenases prhB, prhD, and prhN, as well as the isomerase prhC, are probably involved in the late stage of paraherquonin biosynthesis, after the production of berkeleydione. Especially prhC might be a multifunctional enzyme that catalyzes the D-ring expansion via intramolecular methoxy rearrangement, as well as the hydrolysis of the expanded D-ring. The protein is Methyltransferase prhM of Penicillium brasilianum.